A 212-amino-acid polypeptide reads, in one-letter code: ATP-dependent Clp protease proteolytic subunit (212 aa).

The active-site Nucleophile is the Ser106. His131 is an active-site residue.

It belongs to the peptidase S14 family. In terms of assembly, fourteen ClpP subunits assemble into 2 heptameric rings which stack back to back to give a disk-like structure with a central cavity, resembling the structure of eukaryotic proteasomes.

The protein resides in the cytoplasm. The enzyme catalyses Hydrolysis of proteins to small peptides in the presence of ATP and magnesium. alpha-casein is the usual test substrate. In the absence of ATP, only oligopeptides shorter than five residues are hydrolyzed (such as succinyl-Leu-Tyr-|-NHMec, and Leu-Tyr-Leu-|-Tyr-Trp, in which cleavage of the -Tyr-|-Leu- and -Tyr-|-Trp bonds also occurs).. Cleaves peptides in various proteins in a process that requires ATP hydrolysis. Has a chymotrypsin-like activity. Plays a major role in the degradation of misfolded proteins. The chain is ATP-dependent Clp protease proteolytic subunit from Rhodopseudomonas palustris (strain HaA2).